We begin with the raw amino-acid sequence, 232 residues long: MTDEVSNTAAADVRDNGQIVFDAGAIRVLAVLAEKEALTPDAYPMSINALTNGCNQLTSRDPVMALTEVDVQGILQELIADKFVAEVNQAGARVSKYEHRLRMKWSLEQDKLAVLTVLMLRGIQTAGEIRTRSGRLHEFATIADVEAALQFLIDKYPPLVARLPRAPGTKETRYAPLLSSEVFPEAGELPVAAASGVSRHDRIGQLEAEVSSLRDEVEALKAQFQQFKQQFE.

Belongs to the UPF0502 family.

In Janthinobacterium sp. (strain Marseille) (Minibacterium massiliensis), this protein is UPF0502 protein mma_2112.